Here is a 413-residue protein sequence, read N- to C-terminus: Probable Xaa-Pro aminopeptidase UREG_07123 (413 aa).

Mn(2+) is bound by residues D194, D205, E340, and E379.

This sequence belongs to the peptidase M24B family. It depends on Mn(2+) as a cofactor.

The enzyme catalyses Release of any N-terminal amino acid, including proline, that is linked to proline, even from a dipeptide or tripeptide.. Its function is as follows. Catalyzes the removal of a penultimate prolyl residue from the N-termini of peptides. The sequence is that of Probable Xaa-Pro aminopeptidase UREG_07123 from Uncinocarpus reesii (strain UAMH 1704).